The primary structure comprises 88 residues: Small ribosomal subunit protein uS17 (88 aa).

Belongs to the universal ribosomal protein uS17 family. In terms of assembly, part of the 30S ribosomal subunit.

Its function is as follows. One of the primary rRNA binding proteins, it binds specifically to the 5'-end of 16S ribosomal RNA. The protein is Small ribosomal subunit protein uS17 of Mycoplasmopsis pulmonis (strain UAB CTIP) (Mycoplasma pulmonis).